The primary structure comprises 509 residues: Bifunctional purine biosynthesis protein PurH (509 aa).

Positions 1–144 constitute an MGS-like domain; the sequence is MKRALISVSD…KNYAAVTVVV (144 aa).

Belongs to the PurH family.

It carries out the reaction (6R)-10-formyltetrahydrofolate + 5-amino-1-(5-phospho-beta-D-ribosyl)imidazole-4-carboxamide = 5-formamido-1-(5-phospho-D-ribosyl)imidazole-4-carboxamide + (6S)-5,6,7,8-tetrahydrofolate. The catalysed reaction is IMP + H2O = 5-formamido-1-(5-phospho-D-ribosyl)imidazole-4-carboxamide. It functions in the pathway purine metabolism; IMP biosynthesis via de novo pathway; 5-formamido-1-(5-phospho-D-ribosyl)imidazole-4-carboxamide from 5-amino-1-(5-phospho-D-ribosyl)imidazole-4-carboxamide (10-formyl THF route): step 1/1. It participates in purine metabolism; IMP biosynthesis via de novo pathway; IMP from 5-formamido-1-(5-phospho-D-ribosyl)imidazole-4-carboxamide: step 1/1. This Listeria monocytogenes serotype 4b (strain CLIP80459) protein is Bifunctional purine biosynthesis protein PurH.